Here is a 420-residue protein sequence, read N- to C-terminus: Cytochrome c biogenesis protein Ccs1 (420 aa).

3 helical membrane-spanning segments follow: residues 12 to 32 (LRFS…GTVI), 71 to 91 (TWWF…CTFL), and 157 to 177 (IAPI…IVGS).

This sequence belongs to the Ccs1/CcsB family. As to quaternary structure, may interact with CcsA.

It is found in the plastid. Its subcellular location is the chloroplast thylakoid membrane. Required during biogenesis of c-type cytochromes (cytochrome c6 and cytochrome f) at the step of heme attachment. This chain is Cytochrome c biogenesis protein Ccs1, found in Phaeodactylum tricornutum (strain CCAP 1055/1).